The following is a 757-amino-acid chain: RNA cytosine C(5)-methyltransferase NSUN2 (757 aa).

Residues 1 to 35 (MGRRARGRRFQQPPQPEGEEDASDGGRKRGQAGWE) form a disordered region. Ser23 is subject to Phosphoserine. Lys46 participates in a covalent cross-link: Glycyl lysine isopeptide (Lys-Gly) (interchain with G-Cter in SUMO2). At Ser139 the chain carries Phosphoserine; by AURKB. Residues 184-190 (CAAPGSK), Asp215, Asp242, and Asp268 contribute to the S-adenosyl-L-methionine site. Cys321 (nucleophile) is an active-site residue. The tract at residues 436–504 (NKRQPKVQNK…EKKDGVCGPP (69 aa)) is disordered. Residues Ser456 and Ser473 each carry the phosphoserine modification. Residues 463-476 (GNPSDQSELESQMI) show a composition bias toward polar residues. Residues Lys510 and Lys515 each participate in a glycyl lysine isopeptide (Lys-Gly) (interchain with G-Cter in SUMO2) cross-link. Lys585 is subject to N6-acetyllysine; alternate. Position 585 is an N6-malonyllysine; alternate (Lys585). Lys585 participates in a covalent cross-link: Glycyl lysine isopeptide (Lys-Gly) (interchain with G-Cter in SUMO2); alternate. A Phosphoserine modification is found at Ser592. Residues Lys639, Lys653, and Lys659 each participate in a glycyl lysine isopeptide (Lys-Gly) (interchain with G-Cter in SUMO2) cross-link. The tract at residues 716 to 757 (LTNENAASPEQPGDEDAKQTAQDPCVPDSVPGCDAAAAEPSR) is disordered. A Phosphothreonine modification is found at Thr717. At Ser723 the chain carries Phosphoserine.

This sequence belongs to the class I-like SAM-binding methyltransferase superfamily. RsmB/NOP family. TRM4 subfamily. Interacts with NPM1 and NCL during interphase; interaction is disrupted following phosphorylation at Ser-139. Post-translationally, phosphorylated at Ser-139 by AURKB during mitosis, leading to abolish methyltransferase activity and the interaction with NPM1. As to expression, ubiquitously expressed at low level. Up-regulated in tumors. Dynamically expressed during morphogenesis and in adult skin: in adult skin, expression is up-regulated in the bulge and hair germ as soon as the hair follicle enters its growing phase (anagen). During anagen, expressed at highest level in cells of the hair germ that give rise to the hair matrix.

The protein resides in the nucleus. It localises to the nucleolus. It is found in the cytoplasm. The protein localises to the mitochondrion. Its subcellular location is the cytoskeleton. The protein resides in the spindle. It localises to the secreted. It is found in the extracellular exosome. It carries out the reaction cytidine(48) in tRNA + S-adenosyl-L-methionine = 5-methylcytidine(48) in tRNA + S-adenosyl-L-homocysteine + H(+). The catalysed reaction is cytidine(49) in tRNA + S-adenosyl-L-methionine = 5-methylcytidine(49) in tRNA + S-adenosyl-L-homocysteine + H(+). It catalyses the reaction cytidine(50) in tRNA + S-adenosyl-L-methionine = 5-methylcytidine(50) in tRNA + S-adenosyl-L-homocysteine + H(+). The enzyme catalyses cytidine(34) in tRNA precursor + S-adenosyl-L-methionine = 5-methylcytidine(34) in tRNA precursor + S-adenosyl-L-homocysteine + H(+). It carries out the reaction a cytidine in mRNA + S-adenosyl-L-methionine = a 5-methylcytidine in mRNA + S-adenosyl-L-homocysteine + H(+). With respect to regulation, inhibited by magnesium ions. In terms of biological role, RNA cytosine C(5)-methyltransferase that methylates cytosine to 5-methylcytosine (m5C) in various RNAs, such as tRNAs, mRNAs and some long non-coding RNAs (lncRNAs). Involved in various processes, such as epidermal stem cell differentiation, testis differentiation and maternal to zygotic transition during early development: acts by increasing protein synthesis; cytosine C(5)-methylation promoting tRNA stability and preventing mRNA decay. Methylates cytosine to 5-methylcytosine (m5C) at positions 34 and 48 of intron-containing tRNA(Leu)(CAA) precursors, and at positions 48, 49 and 50 of tRNA(Gly)(GCC) precursors. tRNA methylation is required generation of RNA fragments derived from tRNAs (tRFs). Also mediates C(5)-methylation of mitochondrial tRNAs. Catalyzes cytosine C(5)-methylation of mRNAs, leading to stabilize them and prevent mRNA decay: mRNA stabilization involves YBX1 that specifically recognizes and binds m5C-modified transcripts. Cytosine C(5)-methylation of mRNAs also regulates mRNA export: methylated transcripts are specifically recognized by THOC4/ALYREF, which mediates mRNA nucleo-cytoplasmic shuttling. Also mediates cytosine C(5)-methylation of non-coding RNAs, such as vault RNAs (vtRNAs), promoting their processing into regulatory small RNAs. Cytosine C(5)-methylation of vtRNA VTRNA1.1 promotes its processing into small-vault RNA4 (svRNA4) and regulates epidermal differentiation. May act downstream of Myc to regulate epidermal cell growth and proliferation. Required for proper spindle assembly and chromosome segregation, independently of its methyltransferase activity. This chain is RNA cytosine C(5)-methyltransferase NSUN2, found in Mus musculus (Mouse).